Reading from the N-terminus, the 415-residue chain is Carboxypeptidase G2 (415 aa).

The signal sequence occupies residues 1-22; that stretch reads MRPSIHRTAIAAVLATAFVAGT. Zn(2+) is bound at residue histidine 112. Aspartate 114 is an active-site residue. Aspartate 141 contacts Zn(2+). Glutamate 175 functions as the Proton acceptor in the catalytic mechanism. 3 residues coordinate Zn(2+): glutamate 176, glutamate 200, and histidine 385.

This sequence belongs to the peptidase M20A family. As to quaternary structure, homodimer. It depends on Zn(2+) as a cofactor.

It catalyses the reaction Release of C-terminal glutamate residues from a wide range of N-acylating moieties, including peptidyl, aminoacyl, benzoyl, benzyloxycarbonyl, folyl and pteroyl groups.. Functionally, catalyzes the hydrolysis of reduced and non-reduced folates to pteroates and L-glutamate. This enzyme has a broad specificity. The polypeptide is Carboxypeptidase G2 (cpg2) (Pseudomonas sp. (strain RS-16)).